The chain runs to 62 residues: DNA-directed RNA polymerase subunit Rpo10 (62 aa).

Cysteine 6, cysteine 9, cysteine 43, and cysteine 44 together coordinate Zn(2+).

Belongs to the archaeal Rpo10/eukaryotic RPB10 RNA polymerase subunit family. In terms of assembly, part of the RNA polymerase complex. Zn(2+) serves as cofactor.

It is found in the cytoplasm. It catalyses the reaction RNA(n) + a ribonucleoside 5'-triphosphate = RNA(n+1) + diphosphate. Functionally, DNA-dependent RNA polymerase (RNAP) catalyzes the transcription of DNA into RNA using the four ribonucleoside triphosphates as substrates. The protein is DNA-directed RNA polymerase subunit Rpo10 of Methanosarcina acetivorans (strain ATCC 35395 / DSM 2834 / JCM 12185 / C2A).